Reading from the N-terminus, the 251-residue chain is Imidazole glycerol phosphate synthase subunit HisF (251 aa).

Residues Asp-11 and Asp-130 contribute to the active site.

Belongs to the HisA/HisF family. In terms of assembly, heterodimer of HisH and HisF.

The protein localises to the cytoplasm. The enzyme catalyses 5-[(5-phospho-1-deoxy-D-ribulos-1-ylimino)methylamino]-1-(5-phospho-beta-D-ribosyl)imidazole-4-carboxamide + L-glutamine = D-erythro-1-(imidazol-4-yl)glycerol 3-phosphate + 5-amino-1-(5-phospho-beta-D-ribosyl)imidazole-4-carboxamide + L-glutamate + H(+). It functions in the pathway amino-acid biosynthesis; L-histidine biosynthesis; L-histidine from 5-phospho-alpha-D-ribose 1-diphosphate: step 5/9. In terms of biological role, IGPS catalyzes the conversion of PRFAR and glutamine to IGP, AICAR and glutamate. The HisF subunit catalyzes the cyclization activity that produces IGP and AICAR from PRFAR using the ammonia provided by the HisH subunit. In Chlorobium chlorochromatii (strain CaD3), this protein is Imidazole glycerol phosphate synthase subunit HisF.